Consider the following 242-residue polypeptide: Type III pantothenate kinase (242 aa).

Position 7 to 14 (aspartate 7 to lysine 14) interacts with ATP. Substrate-binding positions include tyrosine 91 and glycine 98 to arginine 101. Aspartate 100 serves as the catalytic Proton acceptor. Threonine 121 is an ATP binding site. Threonine 171 provides a ligand contact to substrate.

The protein belongs to the type III pantothenate kinase family. As to quaternary structure, homodimer. NH4(+) is required as a cofactor. It depends on K(+) as a cofactor.

Its subcellular location is the cytoplasm. The catalysed reaction is (R)-pantothenate + ATP = (R)-4'-phosphopantothenate + ADP + H(+). Its pathway is cofactor biosynthesis; coenzyme A biosynthesis; CoA from (R)-pantothenate: step 1/5. In terms of biological role, catalyzes the phosphorylation of pantothenate (Pan), the first step in CoA biosynthesis. This Xanthomonas euvesicatoria pv. vesicatoria (strain 85-10) (Xanthomonas campestris pv. vesicatoria) protein is Type III pantothenate kinase.